We begin with the raw amino-acid sequence, 331 residues long: MELHQLIAHKEKRWRATLLVMLAVLLVLSALYLMVGEVFLSPFSSLSSFEHKLLVDLRLPRLVAAMVIGAALAVSGATLQVLLGNVLAEPGVLGISGGASLAMVIALFLLPVMPTPTVFMLAAIIGALVFTLILVGMARAMHLSTSRMLLVGVALGILSGAFVTWAFYFSDDLSLRQLMYWLMGSIGGASWHHHLVTLVLLPVLVWLCLQGQTLDKLMLGETHAAQLGVDVHKVRWRLILAISILIGCAVALGGIISFVGLVVPHLLRMAFGSENRFLLPLSAFAGATLLVFSDIWARTLLDSAELPLGVMTTTIGAPIFIWMLIRSHDAH.

The next 9 membrane-spanning stretches (helical) occupy residues 20 to 42, 62 to 84, 91 to 113, 117 to 136, 148 to 170, 190 to 209, 240 to 262, 277 to 296, and 303 to 325; these read VMLAVLLVLSALYLMVGEVFLSP, LVAAMVIGAALAVSGATLQVLLG, GVLGISGGASLAMVIALFLLPVM, TVFMLAAIIGALVFTLILVG, MLLVGVALGILSGAFVTWAFYFS, SWHHHLVTLVLLPVLVWLCL, LAISILIGCAVALGGIISFVGLV, FLLPLSAFAGATLLVFSDIW, and SAELPLGVMTTTIGAPIFIWMLI.

Belongs to the binding-protein-dependent transport system permease family. FecCD subfamily. The complex is composed of two ATP-binding proteins (BtuD), two transmembrane proteins (BtuC) and a solute-binding protein (BtuF).

The protein localises to the cell inner membrane. Its function is as follows. Part of the ABC transporter complex BtuCDF involved in vitamin B12 import. Involved in the translocation of the substrate across the membrane. This is Vitamin B12 import system permease protein BtuC from Vibrio vulnificus (strain CMCP6).